The primary structure comprises 388 residues: MTASVLLHPRWIEPTVMFLYDNGGGLVADELNKNMEGAAAAAAAAAAAAAAGAGGGGFPHPAAAAAGGNFSVAAAAAAAAAAAANQCRNLMAHPAPLAPGAASAYSSAPGEAPPSAAAAAAAAAAAAAAAAAASSSGGPGPAGPAGAEAAKQCSPCSAAAQSSSGPAALPYGYFGSGYYPCARMGPHPNAIKSCAQPASAAAAAAFADKYMDTAGPAAEEFSSRAKEFAFYHQGYAAGPYHHHQPMPGYLDMPVVPGLGGPGESRHEPLGLPMESYQPWALPNGWNGQMYCPKEQAQPPHLWKSTLPDVVSHPSDASSYRRGRKKRVPYTKVQLKELEREYATNKFITKDKRRRISATTNLSERQVTIWFQNRRVKEKKVINKLKTTS.

The segment at residues 322 to 381 (GRKKRVPYTKVQLKELEREYATNKFITKDKRRRISATTNLSERQVTIWFQNRRVKEKKVI) is a DNA-binding region (homeobox).

It belongs to the Abd-B homeobox family. As to quaternary structure, binds DNA as a homodimer. Interacts with MEIS1, MEIS2 and MEIS3.

The protein resides in the nucleus. Sequence-specific, AT-rich binding transcription factor which is part of a developmental regulatory system that provides cells with specific positional identities on the anterior-posterior axis. Its function is as follows. Sequence-specific transcription factor which is part of a developmental regulatory system that provides cells with specific positional identities on the anterior-posterior axis. This is Homeobox protein Hox-A13 (HOXA13) from Homo sapiens (Human).